The sequence spans 630 residues: Auxin efflux carrier component 2 (630 aa).

At 1–6 (MITGRD) the chain is on the extracellular side. The chain crosses the membrane as a helical span at residues 7–27 (IYDVLAAIVPLYVAMFLAYGS). Residues 28–38 (VRWWGIFTPDQ) are Cytoplasmic-facing. Residues 39–59 (CSGINRFVAVFAVPLLSFHFI) traverse the membrane as a helical segment. Position 51 (valine 51) interacts with (indol-3-yl)acetate. Residues 60-70 (STNDPYSMNYR) lie on the Extracellular side of the membrane. A helical transmembrane segment spans residues 71–91 (FLAADSLQKLVILAALAVWHN). The Cytoplasmic portion of the chain corresponds to 92–108 (LLSRYRRNGGAAASLDW). A helical transmembrane segment spans residues 109-129 (TITLFSLSTLPNTLVMGIPLL). Positions 120 and 122 each coordinate (indol-3-yl)acetate. The Extracellular segment spans residues 130 to 139 (RAMYGDFSGS). A helical transmembrane segment spans residues 140–160 (LMVQIVVLQSVIWYTLMLFLF). Tyrosine 153 serves as a coordination point for (indol-3-yl)acetate. At 161–490 (EYRGAKALIS…LIRNPNTYSS (330 aa)) the chain is on the cytoplasmic side. Residues 317-350 (ASGKAADPPSYPAPNPGMMPAPRKKELGGSNSNS) form a disordered region. The segment covering 325–335 (PSYPAPNPGMM) has biased composition (pro residues). The chain crosses the membrane as a helical span at residues 491 to 511 (LIGLVWSLVSFRWNIQMPSII). Residues 512–514 (KGS) lie on the Extracellular side of the membrane. A helical transmembrane segment spans residues 515–535 (ISILSDAGLGMAMFSLGLFMA). Over 536 to 549 (LQPKIISCGKTVAT) the chain is Cytoplasmic. Residues 550–570 (FAMAVRFLTGPAVIAATSIAI) form a helical membrane-spanning segment. Over 571–574 (GLRG) the chain is Extracellular. Residues 575 to 595 (VLLHVAIVQAALPQGIVPFVF) form a helical membrane-spanning segment. 2 residues coordinate (indol-3-yl)acetate: isoleucine 590 and valine 591. The Cytoplasmic portion of the chain corresponds to 596 to 609 (AKEYNCHPQILSTA). The chain crosses the membrane as a helical span at residues 610–630 (VIFGMLIALPITILYYVLLGI).

Belongs to the auxin efflux carrier (TC 2.A.69.1) family. Homodimer. As to expression, expressed in roots, leaves, shoot apex and panicles. Expressed in roots, stem bases and young panicles.

The protein resides in the membrane. Acts as a component of the auxin efflux carrier. Involved in the basipetal polar auxin transport which contributes to the spreading growth of the tillers. This Oryza sativa subsp. japonica (Rice) protein is Auxin efflux carrier component 2.